We begin with the raw amino-acid sequence, 768 residues long: Vitamin B12-dependent ribonucleoside-diphosphate reductase (768 aa).

One can recognise an ATP-cone domain in the interval 3 to 97; the sequence is KEVVKRDGTV…LYREKRRAIR (95 aa). Substrate-binding positions include S234, 249 to 250, G278, 432 to 436, and 579 to 583; these read AC, NPCGE, and PTGTI. An intrachain disulfide couples C250 to C445. N432 (proton acceptor) is an active-site residue. The Cysteine radical intermediate role is filled by C434. The active-site Proton acceptor is the E436.

Belongs to the ribonucleoside diphosphate reductase class-2 family. As to quaternary structure, monomer. Requires adenosylcob(III)alamin as cofactor.

It carries out the reaction a 2'-deoxyribonucleoside 5'-diphosphate + [thioredoxin]-disulfide + H2O = a ribonucleoside 5'-diphosphate + [thioredoxin]-dithiol. Provides the precursors necessary for DNA synthesis. Catalyzes the biosynthesis of deoxyribonucleotides from the corresponding ribonucleotides. This Thermoplasma acidophilum (strain ATCC 25905 / DSM 1728 / JCM 9062 / NBRC 15155 / AMRC-C165) protein is Vitamin B12-dependent ribonucleoside-diphosphate reductase.